The primary structure comprises 349 residues: Ribosomal RNA large subunit methyltransferase Cfr (349 aa).

Glu-89 (proton acceptor) is an active-site residue. The region spanning 96 to 331 (KAGWESFCIS…VTVRSQFGID (236 aa)) is the Radical SAM core domain. Cys-103 and Cys-336 are disulfide-bonded. [4Fe-4S] cluster contacts are provided by Cys-110, Cys-114, and Cys-117. Residues 156-157 (GE), Ser-187, 210-212 (SLH), and Asn-291 contribute to the S-adenosyl-L-methionine site. Catalysis depends on Cys-336, which acts as the S-methylcysteine intermediate.

The protein belongs to the radical SAM superfamily. RlmN family. Cfr subfamily. [4Fe-4S] cluster is required as a cofactor.

It is found in the cytoplasm. It catalyses the reaction adenosine(2503) in 23S rRNA + 2 reduced [2Fe-2S]-[ferredoxin] + 2 S-adenosyl-L-methionine = 8-methyladenosine(2503) in 23S rRNA + 5'-deoxyadenosine + L-methionine + 2 oxidized [2Fe-2S]-[ferredoxin] + S-adenosyl-L-homocysteine. Its function is as follows. Specifically methylates position 8 of adenine 2503 in 23S rRNA. Confers resistance to some classes of antibiotics. This Bacillus velezensis (strain DSM 23117 / BGSC 10A6 / LMG 26770 / FZB42) (Bacillus amyloliquefaciens subsp. plantarum) protein is Ribosomal RNA large subunit methyltransferase Cfr.